The sequence spans 118 residues: Integration host factor subunit alpha (118 aa).

The tract at residues 97 to 118 is disordered; sequence NGAMPMSTEESDENTAQSASGG.

It belongs to the bacterial histone-like protein family. As to quaternary structure, heterodimer of an alpha and a beta chain.

This protein is one of the two subunits of integration host factor, a specific DNA-binding protein that functions in genetic recombination as well as in transcriptional and translational control. The chain is Integration host factor subunit alpha from Rhodopseudomonas palustris (strain ATCC BAA-98 / CGA009).